We begin with the raw amino-acid sequence, 152 residues long: Flagellar assembly factor FliW (152 aa).

The protein belongs to the FliW family. In terms of assembly, interacts with translational regulator CsrA and flagellin(s).

The protein localises to the cytoplasm. Functionally, acts as an anti-CsrA protein, binds CsrA and prevents it from repressing translation of its target genes, one of which is flagellin. Binds to flagellin and participates in the assembly of the flagellum. The sequence is that of Flagellar assembly factor FliW from Desulfitobacterium hafniense (strain DSM 10664 / DCB-2).